We begin with the raw amino-acid sequence, 50 residues long: Temporin-SHc (50 aa).

An N-terminal signal peptide occupies residues 1–10 (FLGTINLSLC). The propeptide occupies 11–35 (EQERDADEEERRDEPDGSNVEVEKR). Phe-48 carries the post-translational modification Phenylalanine amide.

As to expression, expressed by the skin glands.

The protein resides in the secreted. It is found in the target cell membrane. Functionally, amphipathic alpha-helical antimicrobial peptide with potent activity against some Gram-positive bacteria (MIC=4-&gt;80 uM), potent activity against fungi (MIC=10-20 uM), and no activity against Gram-negative bacteria. Does not display anti-leishmania activity. Does not show hemolytic activity (LC(50)&gt;80 uM). This Pelophylax saharicus (Sahara frog) protein is Temporin-SHc.